We begin with the raw amino-acid sequence, 140 residues long: Transcription antitermination protein NusB (140 aa).

The protein belongs to the NusB family.

Functionally, involved in transcription antitermination. Required for transcription of ribosomal RNA (rRNA) genes. Binds specifically to the boxA antiterminator sequence of the ribosomal RNA (rrn) operons. This Myxococcus xanthus (strain DK1622) protein is Transcription antitermination protein NusB.